The chain runs to 101 residues: Putative RNA-binding protein RbpA (101 aa).

The RRM domain occupies 2–79 (SIYVGNLSYD…RDLKVNKAKP (78 aa)). The span at 73 to 83 (KVNKAKPRENR) shows a compositional bias: basic and acidic residues. The disordered stretch occupies residues 73 to 101 (KVNKAKPRENRSGGGSFGGGRKSYGGSRY). Positions 84 to 101 (SGGGSFGGGRKSYGGSRY) are enriched in gly residues.

In Synechocystis sp. (strain ATCC 27184 / PCC 6803 / Kazusa), this protein is Putative RNA-binding protein RbpA (rbpA).